Consider the following 276-residue polypeptide: Bifunctional protein FolD 1 (276 aa).

NADP(+)-binding positions include 161-163 (GRG), S186, and T227.

Belongs to the tetrahydrofolate dehydrogenase/cyclohydrolase family. In terms of assembly, homodimer.

The enzyme catalyses (6R)-5,10-methylene-5,6,7,8-tetrahydrofolate + NADP(+) = (6R)-5,10-methenyltetrahydrofolate + NADPH. It catalyses the reaction (6R)-5,10-methenyltetrahydrofolate + H2O = (6R)-10-formyltetrahydrofolate + H(+). The protein operates within one-carbon metabolism; tetrahydrofolate interconversion. In terms of biological role, catalyzes the oxidation of 5,10-methylenetetrahydrofolate to 5,10-methenyltetrahydrofolate and then the hydrolysis of 5,10-methenyltetrahydrofolate to 10-formyltetrahydrofolate. The chain is Bifunctional protein FolD 1 from Frankia casuarinae (strain DSM 45818 / CECT 9043 / HFP020203 / CcI3).